A 403-amino-acid chain; its full sequence is Zinc finger CCHC domain-containing protein 3 (403 aa).

The disordered stretch occupies residues 1-158; that stretch reads MATGGGAEEE…PLQDEPAAAA (158 aa). Basic and acidic residues-rich tracts occupy residues 26-38 and 47-65; these read ARGEEADGGREKM and LAEKKGEFREPRPPRREEE. Over residues 67–79 the composition is skewed to gly residues; that stretch reads GGGGGSAGLGGPA. The segment covering 95-121 has biased composition (basic and acidic residues); sequence GDPKGRRRDPAGEAVDPRKKKGAAEAG. The segment covering 128–139 has biased composition (low complexity); sequence AAAAAMATPARP. Tyr201 is subject to Phosphotyrosine. 3 consecutive CCHC-type zinc fingers follow at residues 335–350, 352–368, and 372–387; these read CFKCGSRTHMSGSCTQ, RCFRCGEEGHLSPYCRK, and CNLCGKRGHAFAQCPK.

In terms of assembly, interacts with CGAS. Interacts with RIGI. Interacts with IFIH1/MDA5.

Its subcellular location is the cytoplasm. Its function is as follows. Nucleic acid-binding protein involved in innate immune response to DNA and RNA viruses. Binds DNA and RNA in the cytoplasm and acts by promoting recognition of viral nucleic acids by virus sensors, such as RIGI, IFIH1/MDA5 and CGAS. Acts as a co-sensor for recognition of double-stranded DNA (dsDNA) by cGAS in the cytoplasm, thereby playing a role in innate immune response to cytosolic dsDNA and DNA virus. Binds dsDNA and probably acts by promoting sensing of dsDNA by CGAS, leading to enhance CGAS oligomerization and activation. Promotes sensing of viral RNA by RIGI-like receptors proteins RIGI and IFIH1/MDA5 via two mechanisms: binds double-stranded RNA (dsRNA), enhancing the binding of RIGI and IFIH1/MDA5 to dsRNA and promotes 'Lys-63'-linked ubiquitination and subsequent activation of RIGI and IFIH1/MDA5. This is Zinc finger CCHC domain-containing protein 3 from Homo sapiens (Human).